The following is a 478-amino-acid chain: MSSVKLWLNGASSISLVGSEELENLGFVGKGGFGAVFRARHTAWNLDVAVKIVNSKKISREVKAMVNLRHENVLLLLGVTENLEWDYVYGPALVTGFMENGSLSGLLQPSCPRPWPLLCRLLEEVVLGMCYLHSLNPSLLHRDLKPSNVLLDPELHAKLADFGLSTFQGGSQSGSGSGSRDSGGTLAYLAPELLDNDGKASKASDVYSFGVLVWTVLAGREAEVVDKTSLIRGAVCNRQRRPPLTELPPDSPETPGLEGLKELMTHCWSSEPKDRPSFQDCESKTNNVYILVQDKVDAAVSKVKHYLSQYRSSDTKLSARESSQKGTEVDCPRETIVYEMLDRLHLEEPSGSVPERLTSLTERRGKEASFGHATPAGTSSDTLAGTPQIPHTLPSRGTTPRPAFTETPGPDPQRNQGDGRNSNPWYTWNAPNPMTGLQSIVLNNCSEVQIGQHNCMSVQPRTAFPKKEPAQFGRGRGW.

Serine 2 is subject to Phosphoserine. The region spanning 22-290 (LENLGFVGKG…CESKTNNVYI (269 aa)) is the Protein kinase domain. ATP is bound by residues 28–36 (VGKGGFGAV) and lysine 51. Residue aspartate 143 is the Proton acceptor of the active site. Position 165 is a phosphoserine (serine 165). Threonine 185 bears the Phosphothreonine mark. Position 201 is a phosphoserine; by autocatalysis (serine 201). At threonine 228 the chain carries Phosphothreonine. Serine 229 is modified (phosphoserine; by autocatalysis). Position 254 is a phosphothreonine (threonine 254). Residues serine 301 and serine 323 each carry the phosphoserine modification. Residues 311 to 330 (RSSDTKLSARESSQKGTEVD) form a disordered region. The span at 313–330 (SDTKLSARESSQKGTEVD) shows a compositional bias: basic and acidic residues. Phosphothreonine is present on threonine 335. Phosphoserine occurs at positions 350, 369, and 380. Residues 362–429 (ERRGKEASFG…RNSNPWYTWN (68 aa)) form a disordered region. Positions 376 to 385 (AGTSSDTLAG) are enriched in polar residues. Threonine 392 is modified (phosphothreonine). Residues 413-429 (QRNQGDGRNSNPWYTWN) show a composition bias toward polar residues. Residues 437–461 (LQSIVLNNCSEVQIGQHNCMSVQPR) carry the RIP homotypic interaction motif (RHIM) motif. At arginine 474 the chain carries Omega-N-methylarginine.

This sequence belongs to the protein kinase superfamily. TKL Ser/Thr protein kinase family. Interacts (via RIP homotypic interaction motif) with RIPK1 (via RIP homotypic interaction motif); this interaction induces RIPK1 phosphorylation and formation of a RIPK1-RIPK3 necrosis-inducing complex. Interacts with MLKL; the interaction is direct and triggers necroptosis. Interacts with ZBP1 (via RIP homotypic interaction motif); interaction with ZBP1 activates RIPK3, triggering necroptosis. Upon TNF-induced necrosis, the RIPK1-RIPK3 dimer further interacts with PGAM5 and MLKL; the formation of this complex leads to PGAM5 phosphorylation and increase in PGAM5 phosphatase activity. Binds TRAF2 and is recruited to the TNFR-1 signaling complex. Interacts with PYGL, GLUL and GLUD1; these interactions result in activation of these metabolic enzymes. Interacts with BIRC2/c-IAP1, BIRC3/c-IAP2 and XIAP/BIRC4. Interacts with ARHGEF2. Interacts with PELI1 (via atypical FHA domain); the phosphorylated form at Thr-185 binds preferentially to PELI1. Interacts with BUB1B, TRAF2 and STUB1. Interacts with CASP6. Component of the AIM2 PANoptosome complex, a multiprotein complex that drives inflammatory cell death (PANoptosis). RIPK1 and RIPK3 undergo reciprocal auto- and trans-phosphorylation. Autophosphorylated following interaction with ZBP1. Phosphorylation of Ser-201 plays a role in the necroptotic function of RIPK3. Autophosphorylates at Thr-228 and Ser-229 following activation by ZBP1: phosphorylation at these sites is a hallmark of necroptosis and is required for binding MLKL. Phosphorylation at Thr-185 is important for its kinase activity, interaction with PELI1 and for its ability to mediate TNF-induced necroptosis. Post-translationally, polyubiquitinated with 'Lys-48' and 'Lys-63'-linked chains by BIRC2/c-IAP1 and BIRC3/c-IAP2, leading to activation of NF-kappa-B. Ubiquitinated by STUB1 leading to its subsequent proteasome-dependent degradation.

The protein resides in the cytoplasm. The protein localises to the cytosol. Its subcellular location is the nucleus. The enzyme catalyses L-seryl-[protein] + ATP = O-phospho-L-seryl-[protein] + ADP + H(+). The catalysed reaction is L-threonyl-[protein] + ATP = O-phospho-L-threonyl-[protein] + ADP + H(+). Its activity is regulated as follows. Activity is stimulated by ZBP1, which senses double-stranded Z-RNA structures. RIPK3-dependent necroptosis is inhibited by RIPK1: RIPK1 prevents the ZBP1-induced activation of RIPK3 via FADD-mediated recruitment of CASP8, which cleaves RIPK1 and limits TNF-induced necroptosis. Serine/threonine-protein kinase that activates necroptosis and apoptosis, two parallel forms of cell death. Necroptosis, a programmed cell death process in response to death-inducing TNF-alpha family members, is triggered by RIPK3 following activation by ZBP1. Activated RIPK3 forms a necrosis-inducing complex and mediates phosphorylation of MLKL, promoting MLKL localization to the plasma membrane and execution of programmed necrosis characterized by calcium influx and plasma membrane damage. In addition to TNF-induced necroptosis, necroptosis can also take place in the nucleus in response to orthomyxoviruses infection: following ZBP1 activation, which senses double-stranded Z-RNA structures, nuclear RIPK3 catalyzes phosphorylation and activation of MLKL, promoting disruption of the nuclear envelope and leakage of cellular DNA into the cytosol. Also regulates apoptosis: apoptosis depends on RIPK1, FADD and CASP8, and is independent of MLKL and RIPK3 kinase activity. Phosphorylates RIPK1: RIPK1 and RIPK3 undergo reciprocal auto- and trans-phosphorylation. In some cell types, also able to restrict viral replication by promoting cell death-independent responses. In response to flavivirus infection in neurons, promotes a cell death-independent pathway that restricts viral replication: together with ZBP1, promotes a death-independent transcriptional program that modifies the cellular metabolism via up-regulation expression of the enzyme ACOD1/IRG1 and production of the metabolite itaconate. Itaconate inhibits the activity of succinate dehydrogenase, generating a metabolic state in neurons that suppresses replication of viral genomes. RIPK3 binds to and enhances the activity of three metabolic enzymes: GLUL, GLUD1, and PYGL. These metabolic enzymes may eventually stimulate the tricarboxylic acid cycle and oxidative phosphorylation, which could result in enhanced ROS production. The polypeptide is Receptor-interacting serine/threonine-protein kinase 3 (Rattus norvegicus (Rat)).